Reading from the N-terminus, the 185-residue chain is Orotate phosphoribosyltransferase (185 aa).

Residues Arg-102, Lys-103, Lys-106, His-108, and 128–136 (DDVITTGGS) contribute to the 5-phospho-alpha-D-ribose 1-diphosphate site. Positions 132 and 160 each coordinate orotate.

This sequence belongs to the purine/pyrimidine phosphoribosyltransferase family. PyrE subfamily. In terms of assembly, homodimer. Requires Mg(2+) as cofactor.

It carries out the reaction orotidine 5'-phosphate + diphosphate = orotate + 5-phospho-alpha-D-ribose 1-diphosphate. It participates in pyrimidine metabolism; UMP biosynthesis via de novo pathway; UMP from orotate: step 1/2. Its function is as follows. Catalyzes the transfer of a ribosyl phosphate group from 5-phosphoribose 1-diphosphate to orotate, leading to the formation of orotidine monophosphate (OMP). The sequence is that of Orotate phosphoribosyltransferase from Leptospira biflexa serovar Patoc (strain Patoc 1 / Ames).